Reading from the N-terminus, the 290-residue chain is Small ribosomal subunit biogenesis GTPase RsgA (290 aa).

Residues 62 to 213 form the CP-type G domain; the sequence is KNSLVRPPIV…IADTPGFSSL (152 aa). Residues 111-114 and 156-164 contribute to the GTP site; these read SKMD and GQTGVGKST. Cysteine 237, cysteine 242, histidine 244, and cysteine 250 together coordinate Zn(2+).

This sequence belongs to the TRAFAC class YlqF/YawG GTPase family. RsgA subfamily. In terms of assembly, monomer. Associates with 30S ribosomal subunit, binds 16S rRNA. The cofactor is Zn(2+).

The protein resides in the cytoplasm. Functionally, one of several proteins that assist in the late maturation steps of the functional core of the 30S ribosomal subunit. Helps release RbfA from mature subunits. May play a role in the assembly of ribosomal proteins into the subunit. Circularly permuted GTPase that catalyzes slow GTP hydrolysis, GTPase activity is stimulated by the 30S ribosomal subunit. In Streptococcus pyogenes serotype M6 (strain ATCC BAA-946 / MGAS10394), this protein is Small ribosomal subunit biogenesis GTPase RsgA.